The chain runs to 61 residues: Sperm protamine P1 (61 aa).

The disordered stretch occupies residues Met1 to Tyr61.

This sequence belongs to the protamine P1 family. In terms of tissue distribution, testis.

Its subcellular location is the nucleus. The protein resides in the chromosome. Protamines substitute for histones in the chromatin of sperm during the haploid phase of spermatogenesis. They compact sperm DNA into a highly condensed, stable and inactive complex. The polypeptide is Sperm protamine P1 (PRM1) (Notoryctes typhlops (Southern marsupial mole)).